Here is a 414-residue protein sequence, read N- to C-terminus: MNTSRFISLFFHGSLVKRIIVGLVLGVVTALISPDLEPVLGFNLAEKVGILGSLFVKGLRAVAPILIFVLVIAAIANKKVGSKSNMKDIVMLYIIGTFGASIVAVLASFSFPMYIPLTTVADSLTPPNSVSEVFVVVISNIFANPIEALATSNFIGILAWAIALGIALRHAAQATKNAVNDLAEAVSKIVHLVISLAPFGIFGLVAATLADKGLGALWDYAHLLLVLLGSMLFMALVVNPFIVYWKIRRNPYPLVWKCISVSGLTAFFTRSSAANIPVNIDLAEELGLDEETYSVSIPLGATINMAGAAITVTVLTLAAVQTLGIPVSIPTAILLSVVSAVCACGASGVAGGSLLLIPLACSLFGISGDVAAQVIAVGFVIGVLQDSTETALNSSTDVLFTAAVCMAEERKNNA.

The next 9 helical transmembrane spans lie at 19–39 (IIVGLVLGVVTALISPDLEPV), 55–75 (FVKGLRAVAPILIFVLVIAAI), 89–109 (IVMLYIIGTFGASIVAVLASF), 148–168 (ALATSNFIGILAWAIALGIAL), 189–209 (IVHLVISLAPFGIFGLVAATL), 223–243 (LLLVLLGSMLFMALVVNPFIV), 297–317 (IPLGATINMAGAAITVTVLTL), 323–343 (LGIPVSIPTAILLSVVSAVCA), and 363–383 (LFGISGDVAAQVIAVGFVIGV).

Belongs to the dicarboxylate/amino acid:cation symporter (DAACS) (TC 2.A.23) family.

It localises to the cell inner membrane. The catalysed reaction is L-serine(in) + Na(+)(in) = L-serine(out) + Na(+)(out). It carries out the reaction L-threonine(in) + Na(+)(in) = L-threonine(out) + Na(+)(out). Its function is as follows. Involved in the import of serine and threonine into the cell, with the concomitant import of sodium (symport system). In Actinobacillus succinogenes (strain ATCC 55618 / DSM 22257 / CCUG 43843 / 130Z), this protein is Serine/threonine transporter SstT.